The following is a 102-amino-acid chain: MQQARVRLAGTAPEDLDDICDDVREIADKTGVTLSGPVPLPTKTLEIPARKSPDGEGTATWEHWEMRVHKRLIDIDADERALRQLMRIQVPNDVSIEIVLED.

The disordered stretch occupies residues 34 to 58; the sequence is LSGPVPLPTKTLEIPARKSPDGEGT.

It belongs to the universal ribosomal protein uS10 family. In terms of assembly, part of the 30S ribosomal subunit.

Its function is as follows. Involved in the binding of tRNA to the ribosomes. The sequence is that of Small ribosomal subunit protein uS10 from Natronomonas pharaonis (strain ATCC 35678 / DSM 2160 / CIP 103997 / JCM 8858 / NBRC 14720 / NCIMB 2260 / Gabara) (Halobacterium pharaonis).